The primary structure comprises 29 residues: Potassium channel toxin alpha-KTx 3.15 (29 aa).

A disulfide bridge links Cys-8 with Cys-27.

The protein belongs to the short scorpion toxin superfamily. Potassium channel inhibitor family. Alpha-KTx 03 subfamily. Expressed by the venom gland.

The protein localises to the secreted. Its function is as follows. May play a role in blocking voltage-gated potassium channels Kv1.1/KCNA1, Kv1.3/KCNA3 and Kv1.6/KCNA6. The protein is Potassium channel toxin alpha-KTx 3.15 of Mesobuthus gibbosus (Mediterranean checkered scorpion).